A 431-amino-acid polypeptide reads, in one-letter code: Protein EARLY STARVATION 1, chloroplastic (431 aa).

A chloroplast-targeting transit peptide spans 1-19; sequence MAACSRGLVARPFDLTARG. 2 disordered regions span residues 65–126 and 403–431; these read GNKP…DTGI and GVYP…SPLE. Over residues 415-431 the composition is skewed to pro residues; sequence PAPPSDDPPGMPPSPLE.

It belongs to the ESV1 family.

The protein resides in the plastid. It localises to the chloroplast stroma. Its function is as follows. Binds preferentially to highly ordered alpha-glucans, such as starch and crystalline maltodextrins. Involved in the organization of the starch granule matrix, thus influencing starch turnover by modulating the accessibility of starch polymers to modifying and degrading enzymes. Required for the control of starch degradation in leaves and starch distribution in nonphotosynthetic parts. Promotes gravitropic responses, negative in shoots but positive in roots, by facilitating starch granules (statoliths) formation in hypocotyls and roots columella. Facilitates tight packing of starch granules in grains. The chain is Protein EARLY STARVATION 1, chloroplastic from Oryza sativa subsp. japonica (Rice).